The sequence spans 231 residues: Ribonuclease 3 (231 aa).

One can recognise an RNase III domain in the interval 5–134 (QKGIKEDFGI…FIGALYKDQG (130 aa)). Residue Glu-47 participates in Mg(2+) binding. Asp-51 is a catalytic residue. Asp-120 and Glu-123 together coordinate Mg(2+). Residue Glu-123 is part of the active site. The 71-residue stretch at 160–230 (DYKSKLQELL…AKKAYQDVTP (71 aa)) folds into the DRBM domain.

This sequence belongs to the ribonuclease III family. As to quaternary structure, homodimer. Mg(2+) serves as cofactor.

The protein resides in the cytoplasm. It carries out the reaction Endonucleolytic cleavage to 5'-phosphomonoester.. In terms of biological role, digests double-stranded RNA. Involved in the processing of primary rRNA transcript to yield the immediate precursors to the large and small rRNAs (23S and 16S). Processes some mRNAs, and tRNAs when they are encoded in the rRNA operon. Processes pre-crRNA and tracrRNA of type II CRISPR loci if present in the organism. The chain is Ribonuclease 3 from Oenococcus oeni (strain ATCC BAA-331 / PSU-1).